The primary structure comprises 150 residues: Transcription antitermination protein NusB (150 aa).

It belongs to the NusB family.

Involved in transcription antitermination. Required for transcription of ribosomal RNA (rRNA) genes. Binds specifically to the boxA antiterminator sequence of the ribosomal RNA (rrn) operons. The protein is Transcription antitermination protein NusB of Alcanivorax borkumensis (strain ATCC 700651 / DSM 11573 / NCIMB 13689 / SK2).